A 330-amino-acid polypeptide reads, in one-letter code: Phosphate acyltransferase (330 aa).

This sequence belongs to the PlsX family. In terms of assembly, homodimer. Probably interacts with PlsY.

The protein localises to the cytoplasm. It catalyses the reaction a fatty acyl-[ACP] + phosphate = an acyl phosphate + holo-[ACP]. It participates in lipid metabolism; phospholipid metabolism. Catalyzes the reversible formation of acyl-phosphate (acyl-PO(4)) from acyl-[acyl-carrier-protein] (acyl-ACP). This enzyme utilizes acyl-ACP as fatty acyl donor, but not acyl-CoA. The chain is Phosphate acyltransferase from Bacillus mycoides (strain KBAB4) (Bacillus weihenstephanensis).